Reading from the N-terminus, the 182-residue chain is Capsid protein (182 aa).

Residues 136–182 form a disordered region; the sequence is NAPILSTLPETTVVRRRRPSGRRTPSPRRRRSQSPRRRRSQSPASSC. A compositionally biased stretch (basic residues) spans 149–175; sequence VRRRRPSGRRTPSPRRRRSQSPRRRRS. Residues 157 to 174 carry the Bipartite nuclear localization signal motif; it reads RRTPSPRRRRSQSPRRRR. A phosphoserine; by host mark is found at Ser-161 and Ser-169. 2 tandem repeats follow at residues 161–168 and 169–176. The 2 X 8 AA repeats of S-P-R-R-R-[PR]-S-Q stretch occupies residues 161–176; the sequence is SPRRRRSQSPRRRRSQ. The tract at residues 176 to 182 is RNA binding; it reads QSPASSC.

This sequence belongs to the orthohepadnavirus core antigen family. In terms of assembly, homodimerizes, then multimerizes. Interacts with cytosol exposed regions of viral L glycoprotein present in the reticulum-to-Golgi compartment. Interacts with human FLNB. Phosphorylated form interacts with host importin alpha; this interaction depends on the exposure of the NLS, which itself depends upon genome maturation and/or phosphorylation of the capsid protein. Interacts with host NUP153. In terms of processing, phosphorylated by host SRPK1, SRPK2, and maybe protein kinase C or GAPDH. Phosphorylation is critical for pregenomic RNA packaging. Protein kinase C phosphorylation is stimulated by HBx protein and may play a role in transport of the viral genome to the nucleus at the late step during the viral replication cycle.

It is found in the virion. The protein resides in the host cytoplasm. Self assembles to form an icosahedral capsid. Most capsids appear to be large particles with an icosahedral symmetry of T=4 and consist of 240 copies of capsid protein, though a fraction forms smaller T=3 particles consisting of 180 capsid proteins. Entering capsids are transported along microtubules to the nucleus. Phosphorylation of the capsid is thought to induce exposure of nuclear localization signal in the C-terminal portion of the capsid protein that allows binding to the nuclear pore complex via the importin (karyopherin-) alpha and beta. Capsids are imported in intact form through the nuclear pore into the nuclear basket, where it probably binds NUP153. Only capsids that contain the mature viral genome can release the viral DNA and capsid protein into the nucleoplasm. Immature capsids get stuck in the basket. Capsids encapsulate the pre-genomic RNA and the P protein. Pre-genomic RNA is reverse-transcribed into DNA while the capsid is still in the cytoplasm. The capsid can then either be directed to the nucleus, providing more genomes for transcription, or bud through the endoplasmic reticulum to provide new virions. In Woolly monkey hepatitis B virus (isolate Louisville) (WMHBV), this protein is Capsid protein.